The chain runs to 212 residues: Pyrrolidone-carboxylate peptidase (212 aa).

Active-site residues include Glu-80, Cys-143, and His-165.

Belongs to the peptidase C15 family. In terms of assembly, homotetramer.

The protein resides in the cytoplasm. The catalysed reaction is Release of an N-terminal pyroglutamyl group from a polypeptide, the second amino acid generally not being Pro.. In terms of biological role, removes 5-oxoproline from various penultimate amino acid residues except L-proline. In Vibrio vulnificus (strain CMCP6), this protein is Pyrrolidone-carboxylate peptidase.